A 62-amino-acid polypeptide reads, in one-letter code: Protein YmcF (62 aa).

It belongs to the YmcF/YnqF peptide family.

This chain is Protein YmcF, found in Escherichia coli (strain K12).